Consider the following 383-residue polypeptide: Beta-1,3-galactosyltransferase 4 (383 aa).

Residues Met1–Arg8 lie on the Cytoplasmic side of the membrane. A helical transmembrane segment spans residues Leu9–Gly29. The Lumenal portion of the chain corresponds to Glu30–Ser383. N-linked (GlcNAc...) asparagine glycosylation occurs at Asn149.

It belongs to the glycosyltransferase 31 family.

It is found in the golgi apparatus membrane. The catalysed reaction is a ganglioside GM2 (d18:1(4E)) + UDP-alpha-D-galactose = a ganglioside GM1 (d18:1(4E)) + UDP + H(+). It catalyses the reaction a ganglioside GM2 + UDP-alpha-D-galactose = a ganglioside GM1 + UDP + H(+). The enzyme catalyses a ganglioside GD2 (d18:1(4E)) + UDP-alpha-D-galactose = a ganglioside GD1b (d18:1(4E)) + UDP + H(+). It carries out the reaction a ganglioside GA2 (d18:1(4E)) + UDP-alpha-D-galactose = a ganglioside GA1 (d18:1(4E)) + UDP + H(+). It functions in the pathway protein modification; protein glycosylation. Functionally, involved in GM1/GD1B/GA1 ganglioside biosynthesis. This is Beta-1,3-galactosyltransferase 4 (B3GALT4) from Canis lupus familiaris (Dog).